The following is a 231-amino-acid chain: Flagellar L-ring protein (231 aa).

An N-terminal signal peptide occupies residues 1 to 18 (MNRLMIVSLLGIATALGG). Cys19 is lipidated: N-palmitoyl cysteine. The S-diacylglycerol cysteine moiety is linked to residue Cys19. The tract at residues 118–141 (LSLSAEYGGSRDAKGDSQAGQSNS) is disordered.

The protein belongs to the FlgH family. In terms of assembly, the basal body constitutes a major portion of the flagellar organelle and consists of four rings (L,P,S, and M) mounted on a central rod.

The protein localises to the cell outer membrane. The protein resides in the bacterial flagellum basal body. Its function is as follows. Assembles around the rod to form the L-ring and probably protects the motor/basal body from shearing forces during rotation. The polypeptide is Flagellar L-ring protein (Pseudomonas aeruginosa (strain UCBPP-PA14)).